The following is a 691-amino-acid chain: Guanylate cyclase soluble subunit alpha-1 (691 aa).

The tract at residues Pro26–Thr65 is disordered. The region spanning Thr482 to Glu609 is the Guanylate cyclase domain.

The protein belongs to the adenylyl cyclase class-4/guanylyl cyclase family. Heterodimer of an alpha and a beta chain.

The protein localises to the cytoplasm. It carries out the reaction GTP = 3',5'-cyclic GMP + diphosphate. With respect to regulation, activated by nitric oxide in the presence of magnesium or manganese ions. The protein is Guanylate cyclase soluble subunit alpha-1 (GUCY1A1) of Bos taurus (Bovine).